A 102-amino-acid polypeptide reads, in one-letter code: Small ribosomal subunit protein uS10 (102 aa).

It belongs to the universal ribosomal protein uS10 family. Part of the 30S ribosomal subunit.

In terms of biological role, involved in the binding of tRNA to the ribosomes. The protein is Small ribosomal subunit protein uS10 of Geobacter metallireducens (strain ATCC 53774 / DSM 7210 / GS-15).